Here is a 489-residue protein sequence, read N- to C-terminus: Mitochondrial-processing peptidase subunit beta (489 aa).

Residues 1 to 43 constitute a mitochondrion transit peptide; that stretch reads MAAAAARVVLSSAARRRLWGFSESLLIRGAAGRSLYFGENRLR. Histidine 101 is a binding site for Zn(2+). The active-site Proton acceptor is glutamate 104. The Zn(2+) site is built by histidine 105 and glutamate 181.

This sequence belongs to the peptidase M16 family. Heterodimer of PMPCA (alpha) and PMPCB (beta) subunits, forming the mitochondrial processing protease (MPP) in which PMPCA is involved in substrate recognition and binding and PMPCB is the catalytic subunit. Requires Zn(2+) as cofactor.

The protein localises to the mitochondrion matrix. It catalyses the reaction Release of N-terminal transit peptides from precursor proteins imported into the mitochondrion, typically with Arg in position P2.. Binding to PMPCA is required for catalytic activity. Catalytic subunit of the essential mitochondrial processing protease (MPP), which cleaves the mitochondrial sequence off newly imported precursors proteins. Preferentially, cleaves after an arginine at position P2. Required for PINK1 turnover by coupling PINK1 mitochondrial import and cleavage, which results in subsequent PINK1 proteolysis. In Homo sapiens (Human), this protein is Mitochondrial-processing peptidase subunit beta (PMPCB).